The chain runs to 135 residues: MACGLVASNLNLKPGECLKVRGEVAPDAKSFVLNLGKDSNNLCLHFNPRFDMHGDINTIVCNSKDGGAWGAEQRESAFPFQPGSVVEVCISFGQTDLTIKLPDGYEFSFPNRLNLEAIEHLAADGDFKIKCVAFE.

Residue alanine 2 is modified to N-acetylalanine. A Galectin domain is found at 4 to 135; sequence GLVASNLNLK…DFKIKCVAFE (132 aa). An N6-acetyllysine mark is found at lysine 13, lysine 19, and lysine 29. Position 30 is a phosphoserine (serine 30). A beta-D-galactoside-binding positions include 45 to 49, histidine 53, asparagine 62, and 69 to 72; these read HFNPR and WGAE. Lysine 128 bears the N6-acetyllysine mark.

Homodimer. Binds LGALS3BP. Interacts with CD2, CD3, CD4, CD6, CD7, CD43, ALCAM and CD45. Interacts with laminin (via poly-N-acetyllactosamine). Interacts with SUSD2. Interacts with cargo receptor TMED10; the interaction mediates the translocation from the cytoplasm into the ERGIC (endoplasmic reticulum-Golgi intermediate compartment) and thereby secretion.

The protein localises to the secreted. Its subcellular location is the extracellular space. It localises to the extracellular matrix. The protein resides in the cytoplasm. In terms of biological role, lectin that binds beta-galactoside and a wide array of complex carbohydrates. Plays a role in regulating apoptosis, cell proliferation and cell differentiation. Inhibits CD45 protein phosphatase activity and therefore the dephosphorylation of Lyn kinase. Strong inducer of T-cell apoptosis. In Sus scrofa (Pig), this protein is Galectin-1 (LGALS1).